We begin with the raw amino-acid sequence, 263 residues long: Glutamate racemase (263 aa).

Substrate contacts are provided by residues 13 to 14 (DS) and 45 to 46 (YG). Cysteine 77 acts as the Proton donor/acceptor in catalysis. 78–79 (NT) is a substrate binding site. The active-site Proton donor/acceptor is cysteine 185. Residue 186-187 (TH) coordinates substrate.

Belongs to the aspartate/glutamate racemases family.

The enzyme catalyses L-glutamate = D-glutamate. Its pathway is cell wall biogenesis; peptidoglycan biosynthesis. Functionally, provides the (R)-glutamate required for cell wall biosynthesis. The chain is Glutamate racemase from Vibrio vulnificus (strain YJ016).